The primary structure comprises 3674 residues: Dystrophin (3674 aa).

Residues 1–236 form an actin-binding region; that stretch reads MSEVSSDERE…YVTSLFQVLP (236 aa). Calponin-homology (CH) domains are found at residues 11 to 115 and 130 to 236; these read DVQK…LHWQ and TNSE…QVLP. An ANK2- and ANK-3 binding region spans residues 59–68; sequence PKEKGSTRVH. Polar residues predominate over residues 306 to 318; sequence SDPTRSPFPSQRL. The tract at residues 306 to 325 is disordered; the sequence is SDPTRSPFPSQRLESPEDKS. Spectrin repeat units follow at residues 335–443, 444–552, 555–663, 715–824, 826–930, 939–1041, 1044–1150, 1153–1259, 1262–1363, 1364–1459, 1464–1564, 1567–1672, 1675–1774, 1775–1870, 1873–1975, 1988–2097, 2100–2204, 2207–2314, 2315–2412, 2464–2566, 2569–2675, 2678–2791, 2797–2919, and 2924–3029; these read VNLD…NLHK, VLMD…LLQD, LKWQ…QISQ, EIRK…WLEY, NRII…ELQI, RYQE…KLEE, AKLR…ALKG, DKTI…TLEE, ACWH…LLEQ, SIQS…LFQK, EQRL…QLEK, KLSR…LLLE, KHME…KASI, PLKE…KALE, HQWY…TVHE, EISY…KFDR, EKWR…RLEE, NILS…EIEA, HIKD…LRAK, FNRA…QLNE, KDST…VLEE, RLLQ…HLEA, KRLH…RKID, and RLQE…QLHE. An interaction with SYNM region spans residues 1411–1909; it reads SDLTSHEISL…PEPQDEKKIK (499 aa). The WW domain maps to 3044–3077; the sequence is TSVQGPWERAISPNKVPYYINHETQTTCWDHPKM. The interval 3047–3397 is interaction with SYNM; sequence QGPWERAISP…TVLEGDNMET (351 aa). Residues 3297 to 3353 form a ZZ-type; degenerate zinc finger; sequence KHQAKCNICKECPIIGFRYRSLKHFNYDICQSCFFSGRVAKGHKMHYPMVEYCTPTT. Residues cysteine 3302, cysteine 3305, cysteine 3326, and cysteine 3329 each contribute to the Zn(2+) site. The binds to SNTB1 stretch occupies residues 3455 to 3507; that stretch reads DDEHLLIQHYCQSLNQDSPLSQPRSPAQILISLESEERGELERILADLEEENR. Serine 3472, serine 3479, and serine 3489 each carry phosphoserine. Disordered stretches follow at residues 3517–3543 and 3590–3674; these read KQQHEHKGLSPLPSPPEMMPTSPQSPR and QAEA…EDTM. 2 stretches are compositionally biased toward polar residues: residues 3596 to 3615 and 3651 to 3662; these read NGTTVSSPSTSLQRSDSSQP and QLNNSFPSSRGR. Serine 3601, serine 3602, serine 3606, serine 3612, serine 3613, and serine 3655 each carry phosphoserine.

Interacts with SYNM. Interacts with the syntrophins SNTG1 and SNTG2. Interacts with KRT19. Component of the dystrophin-associated glycoprotein complex which is composed of three subcomplexes: a cytoplasmic complex comprised of DMD (or UTRN), DTNA and a number of syntrophins, such as SNTB1, SNTB2, SNTG1 and SNTG2, the transmembrane dystroglycan complex, and the sarcoglycan-sarcospan complex. Interacts with DAG1 (betaDAG1) with DMD; the interaction is inhibited by phosphorylation on the PPXY motif of DAG1. Interacts with SYNM; SNTA1 and SNTB1. Interacts with CMYA5. Directly interacts with ANK2 and ANK3; these interactions do not interfere with betaDAG1-binding and are necessary for proper localization in muscle cells. Identified in a dystroglycan complex that contains at least PRX, DRP2, UTRN, DMD and DAG1. Interacts with DTNB. Interacts with PGM5; the interaction is direct. Interacts with NOS1; localizes NOS1 to sarcolemma in muscle cells. As to expression, in the retina, expressed in the outer plexiform layer (OPL) and around the blood vessels. Also observed at the vitreal border of the retina corresponding to the inner limiting membrane (ILM). Presynaptically localized in cone pedicles and postsynaptically in bipolar cells (at protein level).

The protein localises to the cell membrane. It is found in the sarcolemma. Its subcellular location is the cytoplasm. The protein resides in the cytoskeleton. It localises to the postsynaptic cell membrane. Its function is as follows. Anchors the extracellular matrix to the cytoskeleton via F-actin. Ligand for dystroglycan. Component of the dystrophin-associated glycoprotein complex which accumulates at the neuromuscular junction (NMJ) and at a variety of synapses in the peripheral and central nervous systems and has a structural function in stabilizing the sarcolemma. Also implicated in signaling events and synaptic transmission. The protein is Dystrophin of Sus scrofa (Pig).